Here is a 582-residue protein sequence, read N- to C-terminus: BTB/POZ domain and ankyrin repeat-containing protein NPR1 (582 aa).

Positions 1–12 are enriched in polar residues; sequence MEPPTSHVTNAF. The segment at 1 to 27 is disordered; it reads MEPPTSHVTNAFSDSDSASVEEGDADA. The BTB domain maps to 55–140; it reads ADARIAVPGG…VLDYLYSGRV (86 aa). The C2HC NPR-type zinc-finger motif lies at 147–161; sequence ACLCVDEDCAHVGCH. The Zn(2+) site is built by Cys-150, Cys-155, His-157, and Cys-160. 4 ANK repeats span residues 229-258, 269-299, 301-328, and 332-361; these read RSNLDMITLEKSLPPDVIKQIIDARLSLGL, KHVRRIHRALDSDDVELVRMLLTEGQTNLDD, FALHYAVEHCDSKITTELLDLALADVNH, and RGYTVLHIAARRREPKIIVSLLTKGARPAD. A salicylic acid-binding core (SBC) region spans residues 391-526; sequence PSPKDRLCIE…VLDKIMDDET (136 aa). Residue Arg-436 coordinates salicylate. Disordered regions lie at residues 525–544 and 551–582; these read ETDPVSLGRDTSAEKRKRFH and QKAFHEDKEENDRSGLSSSSSSTSIGAIRPRR. Residues 553–563 are compositionally biased toward basic and acidic residues; sequence AFHEDKEENDR. A compositionally biased stretch (low complexity) spans 564-574; that stretch reads SGLSSSSSSTS.

The protein belongs to the plant 'ANKYRIN-BTB/POZ' family. 'NPR1-like' subfamily. In terms of assembly, oligomer in an uninduced state; disulfide-linked. Forms activated monomer upon changes in cellular redox potential. Interacts with TGA2.2. Interacts with NRR.

The protein resides in the cytoplasm. Its subcellular location is the nucleus. It localises to the nuclear body. It participates in protein modification; protein ubiquitination. In terms of biological role, salicylic acid (SA)-binding substrate-specific adapter of an E3 ubiquitin-protein ligase complex (CUL3-RBX1-BTB) which mediates the ubiquitination and subsequent proteasomal degradation of target proteins. Transcription cofactor that represses gene expression in the absence of salicylic acid (SA), when attached to negative cis-elements (W-box) with WRKY transcription factors, but stimulates gene expression upon activation by SA, when sumoylated and attached to positive cis-elements (as-1) with TGA transcription factors, thus confering immunity through a series of gene regulations ending in a significant increase in antimicrobial and defense genes expression. Key positive factor of disease resistance. Involved in defense response against the bacterial blight disease caused by Xanthomonas oryzae pv. oryzae (Xoo). Plants over-expressing NPR1/NH1 acquire high levels of resistance to Xoo, express constitutively defense genes and develop lesion-mimic spots on leaves at pre-flowering stage. Involved in basal resistance to the blast pathogen Magnaporthe oryzae. Plants over-expressing NPR1/NH1 have increased resistance to M.oryzae infection. Plays an essential role in benzothiadiazole (BTH)-induced resistance to the blast fungus disease caused by Magnaporthe oryzae. Functions as a transcriptional coactivator of TGA2.1 and LG2 in vitro. Involved in defense response against herbivore. Plants silencing NPR1/NH1 have increased herbivore-induced trypsin proteinase inhibitors and volatiles, which reduces the performance of the striped stem borer (SSB) Chilo suppressalis. This chain is BTB/POZ domain and ankyrin repeat-containing protein NPR1, found in Oryza sativa subsp. indica (Rice).